Consider the following 330-residue polypeptide: Glucosyltransferase 3 (330 aa).

UDP is bound at residue T16. Positions 106–111 (MFSGNF) are substrate protein-binding loop. UDP-binding positions include R179, 211 to 214 (YRPD), and 244 to 249 (SYKLGS).

This sequence belongs to the Gtf3 glucosyltransferase family. As to quaternary structure, homotetramer; a dimer of dimers. It depends on In vitro glycosyltransferase activity is metal-independent. as a cofactor.

It participates in protein modification; protein glycosylation. Required for polymorphic O-glycosylation of the serine-rich repeat protein Fap1. Catalyzes the second step in glycosylation of the serine-rich repeat protein in this bacteria. Transfers glucose from UDP-glucose to the terminal GlcNAc moiety of 3-O-(N-acetyl-alpha-D-glucosaminyl)-L-seryl-[protein] which results from the first glycosylation step of Fap1; does not use other sugar nucleotides as substrates. In Streptococcus parasanguinis, this protein is Glucosyltransferase 3.